A 493-amino-acid chain; its full sequence is Signal recognition particle subunit SRP54 3 (493 aa).

A G-domain region spans residues 1–294; the sequence is MVLADVGGSI…NVEPFVARLL (294 aa). GTP is bound by residues 107 to 114, 189 to 193, and 247 to 250; these read GLQGSGKT, DTSGR, and TKLD. The interval 295 to 493 is M-domain; that stretch reads GRGDLPGLID…KMLAGMRGGA (199 aa).

The protein belongs to the GTP-binding SRP family. SRP54 subfamily. In terms of assembly, component of a signal recognition particle (SRP) complex that consists of a 7SL RNA molecule of 300 nucleotides and six protein subunits: SRP72, SRP68, SRP54, SRP19, SRP14 and SRP9.

It localises to the cytoplasm. Its subcellular location is the endoplasmic reticulum. It catalyses the reaction GTP + H2O = GDP + phosphate + H(+). Component of the signal recognition particle (SRP) complex, a ribonucleoprotein complex that mediates the cotranslational targeting of secretory and membrane proteins to the endoplasmic reticulum (ER). As part of the SRP complex, associates with the SRP receptor (SR) component SRPRA to target secretory proteins to the endoplasmic reticulum membrane. Binds to the signal sequence of presecretory proteins when they emerge from the ribosomes. Displays basal GTPase activity, and stimulates reciprocal GTPase activation of the SR subunit SRPRA. Forms a guanosine 5'-triphosphate (GTP)-dependent complex with the SR subunit SRPRA. SR compaction and GTPase mediated rearrangement of SR drive SRP-mediated cotranslational protein translocation into the ER. Requires the presence of SRP9/SRP14 and/or SRP19 to stably interact with RNA. This chain is Signal recognition particle subunit SRP54 3 (SRP54-3), found in Hordeum vulgare (Barley).